The chain runs to 735 residues: E3 UFM1-protein ligase 1 homolog (735 aa).

The interval 389 to 445 (RLEAEKKKQGGAKAAVKVQEETDDWGDGKKGGKGGKKNAKSVKGGSKSSAPSTSSNL) is disordered. Positions 419–428 (GGKGGKKNAK) are enriched in basic residues. A compositionally biased stretch (low complexity) spans 429–445 (SVKGGSKSSAPSTSSNL).

The protein belongs to the UFL1 family.

E3 UFM1-protein ligase that mediates ufmylation of target proteins. This Caenorhabditis elegans protein is E3 UFM1-protein ligase 1 homolog (ufl-1).